The primary structure comprises 75 residues: Exodeoxyribonuclease 7 small subunit (75 aa).

This sequence belongs to the XseB family. As to quaternary structure, heterooligomer composed of large and small subunits.

The protein localises to the cytoplasm. The catalysed reaction is Exonucleolytic cleavage in either 5'- to 3'- or 3'- to 5'-direction to yield nucleoside 5'-phosphates.. In terms of biological role, bidirectionally degrades single-stranded DNA into large acid-insoluble oligonucleotides, which are then degraded further into small acid-soluble oligonucleotides. The chain is Exodeoxyribonuclease 7 small subunit from Thermoanaerobacter sp. (strain X514).